A 508-amino-acid polypeptide reads, in one-letter code: Small ribosomal subunit protein uS3m (508 aa).

The protein belongs to the universal ribosomal protein uS3 family. As to quaternary structure, component of the mitochondrial small ribosomal subunit (mt-SSU). Mature N.crassa 74S mitochondrial ribosomes consist of a small (37S) and a large (54S) subunit. The 37S small subunit contains a 16S ribosomal RNA (16S mt-rRNA) and 32 different proteins. The 54S large subunit contains a 23S rRNA (23S mt-rRNA) and 42 different proteins. uS3m, uS4m and uS5m form the narrow entry site of the mRNA channel.

The protein resides in the mitochondrion. Functionally, component of the mitochondrial ribosome (mitoribosome), a dedicated translation machinery responsible for the synthesis of mitochondrial genome-encoded proteins, including at least some of the essential transmembrane subunits of the mitochondrial respiratory chain. The mitoribosomes are attached to the mitochondrial inner membrane and translation products are cotranslationally integrated into the membrane. uS3m is essential for mitochondrial protein synthesis and required for the maturation of small ribosomal subunits. The protein is Small ribosomal subunit protein uS3m (var1) of Neurospora crassa (strain ATCC 24698 / 74-OR23-1A / CBS 708.71 / DSM 1257 / FGSC 987).